The chain runs to 66 residues: Large ribosomal subunit protein bL31 (66 aa).

The Zn(2+) site is built by Cys16, Cys18, Cys36, and Cys39.

Belongs to the bacterial ribosomal protein bL31 family. Type A subfamily. In terms of assembly, part of the 50S ribosomal subunit. Zn(2+) serves as cofactor.

In terms of biological role, binds the 23S rRNA. The protein is Large ribosomal subunit protein bL31 of Leptospira biflexa serovar Patoc (strain Patoc 1 / Ames).